The chain runs to 132 residues: Small ribosomal subunit protein uS11 (132 aa).

The protein belongs to the universal ribosomal protein uS11 family. Part of the 30S ribosomal subunit. Interacts with proteins S7 and S18. Binds to IF-3.

Functionally, located on the platform of the 30S subunit, it bridges several disparate RNA helices of the 16S rRNA. Forms part of the Shine-Dalgarno cleft in the 70S ribosome. In Chlamydia felis (strain Fe/C-56) (Chlamydophila felis), this protein is Small ribosomal subunit protein uS11.